The chain runs to 452 residues: MNNLNQTIVAPTTNISTQAISLIRISGDDSFNIINKLLKTKIKEEKNVWVRKMFDGQELVDEVVITSFVSPASFTGENVVEIACHGGILNTQRIINLIIKNGARMANKGEFSQRAFLNNKIDLIQAEGINDLIFAKNELALKIGVNNMSGAHNQSIINLKGNLLDIISRIQVSIDYPDYDDVEGSSIPELAKALSGINEEVNNLLKRSKMAIKNTNGIKTAIVGKTNVGKSSLLNALLNEDKAIVTDIHGTTRDIVTGEINLENISLNLIDTAGIRETTDIVEGLGIEKSLKIIDEAELVLFVVDFKSINDEENKMIFDKLENKNYILVFNKSEFINDIERNKIKDLHNNFVYTSAINNDIDNLIMKIEQMHINEEIINNDSLILINLQQITLVEQVKDRLEKSLNAIIGGMPIDIVNVDLHEAWDYLNQLIGEQYDEEIIDNIFKKYCLGK.

The (6S)-5-formyl-5,6,7,8-tetrahydrofolate site is built by Arg-24, Glu-81, and Lys-120. Residues 217-373 (GIKTAIVGKT…LIMKIEQMHI (157 aa)) enclose the TrmE-type G domain. Asn-227 contributes to the K(+) binding site. GTP is bound by residues 227 to 232 (NVGKSS), 246 to 252 (TDIHGTT), and 271 to 274 (DTAG). Residue Ser-231 coordinates Mg(2+). Residues Thr-246, Ile-248, and Thr-251 each contribute to the K(+) site. Thr-252 contacts Mg(2+). Lys-452 lines the (6S)-5-formyl-5,6,7,8-tetrahydrofolate pocket.

This sequence belongs to the TRAFAC class TrmE-Era-EngA-EngB-Septin-like GTPase superfamily. TrmE GTPase family. Homodimer. Heterotetramer of two MnmE and two MnmG subunits. K(+) serves as cofactor.

It is found in the cytoplasm. Exhibits a very high intrinsic GTPase hydrolysis rate. Involved in the addition of a carboxymethylaminomethyl (cmnm) group at the wobble position (U34) of certain tRNAs, forming tRNA-cmnm(5)s(2)U34. In Mesoplasma florum (strain ATCC 33453 / NBRC 100688 / NCTC 11704 / L1) (Acholeplasma florum), this protein is tRNA modification GTPase MnmE.